Consider the following 371-residue polypeptide: Anhydro-N-acetylmuramic acid kinase (371 aa).

Position 10–17 (10–17 (GTSLDGID)) interacts with ATP.

Belongs to the anhydro-N-acetylmuramic acid kinase family.

It catalyses the reaction 1,6-anhydro-N-acetyl-beta-muramate + ATP + H2O = N-acetyl-D-muramate 6-phosphate + ADP + H(+). The protein operates within amino-sugar metabolism; 1,6-anhydro-N-acetylmuramate degradation. It participates in cell wall biogenesis; peptidoglycan recycling. Its function is as follows. Catalyzes the specific phosphorylation of 1,6-anhydro-N-acetylmuramic acid (anhMurNAc) with the simultaneous cleavage of the 1,6-anhydro ring, generating MurNAc-6-P. Is required for the utilization of anhMurNAc either imported from the medium or derived from its own cell wall murein, and thus plays a role in cell wall recycling. This chain is Anhydro-N-acetylmuramic acid kinase, found in Chromohalobacter salexigens (strain ATCC BAA-138 / DSM 3043 / CIP 106854 / NCIMB 13768 / 1H11).